The sequence spans 219 residues: MKSTCYMIGILLLILQNTYQSPVPEADGSSRSVKAARNEAVDDSEQLKEVKRHSQGTFTSDYSKYLDSRRAQDFVQWLMNTKRSGGLSRRNADYERHAEGTFTSDVTQHLDEKAAKEFIDWLINGGPTKEIISRRNAEIERHAEGTYTNDVTEYLEEKATKAFIEWLIKGKPKKIRYSRHAEGTFTNDMTNYLEEKAAKEFVGWLINGRPKRKDLLEEH.

The first 20 residues, 1–20 (MKSTCYMIGILLLILQNTYQ), serve as a signal peptide directing secretion. 5 consecutive propeptides follow at residues 21–50 (SPVP…LKEV), 84–95 (SGGLSRRNADYE), 136–140 (NAEIE), 175–178 (IRYS), and 213–219 (KDLLEEH). The disordered stretch occupies residues 23–43 (VPEADGSSRSVKAARNEAVDD).

Belongs to the glucagon family.

The protein resides in the secreted. Its function is as follows. Promotes hydrolysis of glycogen and lipids, and raises the blood sugar level. The polypeptide is Glucagon-2 (gcg2) (Xenopus laevis (African clawed frog)).